A 119-amino-acid polypeptide reads, in one-letter code: Large ribosomal subunit protein bL20 (119 aa).

The protein belongs to the bacterial ribosomal protein bL20 family.

In terms of biological role, binds directly to 23S ribosomal RNA and is necessary for the in vitro assembly process of the 50S ribosomal subunit. It is not involved in the protein synthesizing functions of that subunit. This Paracoccus denitrificans (strain Pd 1222) protein is Large ribosomal subunit protein bL20.